A 160-amino-acid polypeptide reads, in one-letter code: Transcriptional regulator MraZ (160 aa).

SpoVT-AbrB domains lie at Asn-5 to Tyr-50 and Ala-93 to Glu-136.

This sequence belongs to the MraZ family. As to quaternary structure, forms oligomers.

It is found in the cytoplasm. The protein resides in the nucleoid. The protein is Transcriptional regulator MraZ of Geotalea daltonii (strain DSM 22248 / JCM 15807 / FRC-32) (Geobacter daltonii).